Reading from the N-terminus, the 540-residue chain is Chaperonin GroEL (540 aa).

ATP contacts are provided by residues 30–33 (TLAP), Lys-51, 87–91 (DGTTT), Gly-415, 479–481 (NAA), and Asp-495.

This sequence belongs to the chaperonin (HSP60) family. Forms a cylinder of 14 subunits composed of two heptameric rings stacked back-to-back. Interacts with the co-chaperonin GroES.

It is found in the cytoplasm. It carries out the reaction ATP + H2O + a folded polypeptide = ADP + phosphate + an unfolded polypeptide.. Together with its co-chaperonin GroES, plays an essential role in assisting protein folding. The GroEL-GroES system forms a nano-cage that allows encapsulation of the non-native substrate proteins and provides a physical environment optimized to promote and accelerate protein folding. The chain is Chaperonin GroEL from Methylovorus sp. (strain SS1 / DSM 11726).